The following is a 712-amino-acid chain: Patatin-like phospholipase domain-containing protein ACLA_029670 (712 aa).

Residues 1-10 (MTSAEKSATR) are compositionally biased toward polar residues. Residues 1 to 20 (MTSAEKSATRNIYDPSALPD) form a disordered region. The helical transmembrane segment at 85–105 (WPFLFIVFAWITVLGIAYALT) threads the bilayer. The region spanning 275–466 (LCLSGGATFA…RTDIPIKALN (192 aa)) is the PNPLA domain. The GXSXG signature appears at 306–310 (GTSGG). Ser308 acts as the Nucleophile in catalysis. Asp453 acts as the Proton acceptor in catalysis. The span at 649–664 (FPERHSDYKDESHYTE) shows a compositional bias: basic and acidic residues. The disordered stretch occupies residues 649 to 686 (FPERHSDYKDESHYTEVSDSLSTNSSRPHTPDARRGSI). The segment covering 665–676 (VSDSLSTNSSRP) has biased composition (polar residues). A compositionally biased stretch (basic and acidic residues) spans 677–686 (HTPDARRGSI).

Belongs to the PLPL family.

Its subcellular location is the membrane. Its function is as follows. Probable lipid hydrolase. This Aspergillus clavatus (strain ATCC 1007 / CBS 513.65 / DSM 816 / NCTC 3887 / NRRL 1 / QM 1276 / 107) protein is Patatin-like phospholipase domain-containing protein ACLA_029670.